The chain runs to 328 residues: Phosphate acyltransferase (328 aa).

Belongs to the PlsX family. Homodimer. Probably interacts with PlsY.

The protein localises to the cytoplasm. It carries out the reaction a fatty acyl-[ACP] + phosphate = an acyl phosphate + holo-[ACP]. The protein operates within lipid metabolism; phospholipid metabolism. Functionally, catalyzes the reversible formation of acyl-phosphate (acyl-PO(4)) from acyl-[acyl-carrier-protein] (acyl-ACP). This enzyme utilizes acyl-ACP as fatty acyl donor, but not acyl-CoA. This chain is Phosphate acyltransferase, found in Staphylococcus aureus (strain USA300).